Here is a 909-residue protein sequence, read N- to C-terminus: Disintegrin and metalloproteinase domain-containing protein 12 (909 aa).

The signal sequence occupies residues 1 to 28; it reads MAARPLPVSPARALLLALAGALLAPCEA. Residues 29 to 207 constitute a propeptide that is removed on maturation; the sequence is RGVSLWNQGR…SQTWARRHKR (179 aa). 2 N-linked (GlcNAc...) asparagine glycosylation sites follow: asparagine 111 and asparagine 149. A Cysteine switch motif is present at residues 177–184; that stretch reads GSCGSHHN. Zn(2+) is bound by residues cysteine 179 and histidine 350. Over 208 to 708 the chain is Extracellular; it reads ETLKATKYVE…GPIRQADNQG (501 aa). A Peptidase M12B domain is found at 214–416; that stretch reads KYVELVIVAD…GMGVCLFNLP (203 aa). 3 cysteine pairs are disulfide-bonded: cysteine 325-cysteine 411, cysteine 367-cysteine 395, and cysteine 369-cysteine 378. Glutamate 351 is an active-site residue. Histidine 354 and histidine 360 together coordinate Zn(2+). N-linked (GlcNAc...) asparagine glycosylation is found at asparagine 381 and asparagine 452. Residues 424–510 enclose the Disintegrin domain; that stretch reads GQKCGNRFVE…HCPANVYLHD (87 aa). Cysteines 482 and 502 form a disulfide. N-linked (GlcNAc...) asparagine glycosylation is present at asparagine 651. Positions 656-688 constitute an EGF-like domain; the sequence is GVHECAMQCHGRGVCNNRKNCHCEAHWAPPFCD. 3 cysteine pairs are disulfide-bonded: cysteine 660/cysteine 670, cysteine 664/cysteine 676, and cysteine 678/cysteine 687. A helical membrane pass occupies residues 709-729; sequence LTIGILVTILCLLAAGFVVYL. Over 730 to 909 the chain is Cytoplasmic; the sequence is KRKTLIRLLF…PRSTHTAYIK (180 aa). The segment at 822-862 is disordered; the sequence is LHRAPRAPSVPARPLPAKPALRQAQGTCKPNPPQKPLPADP. The short motif at 828–834 is the SH3-binding; class II element; it reads APSVPAR. An SH3-binding; class I motif is present at residues 834-841; sequence RPLPAKPA. A compositionally biased stretch (pro residues) spans 851-860; it reads PNPPQKPLPA. The SH3-binding; class I motif lies at 885–891; sequence RLAPLRP. Phosphotyrosine; by SRC is present on tyrosine 907.

As to quaternary structure, interacts with alpha-actinin-2 and with syndecans. Interacts with SH3PXD2A. Interacts with FST3. Interacts with RACK1; the interaction is required for PKC-dependent translocation of ADAM12 to the cell membrane. It depends on Zn(2+) as a cofactor. In terms of processing, the precursor is cleaved by a furin endopeptidase. As to expression, isoform 1 is expressed in placenta and skeletal, cardiac, and smooth muscle. Isoform 2 seems to be expressed only in placenta or in embryo and fetus. Both forms were expressed in some tumor cells lines. Not detected in brain, lung, liver, kidney or pancreas.

The protein localises to the cell membrane. The protein resides in the secreted. Involved in skeletal muscle regeneration, specifically at the onset of cell fusion. Also involved in macrophage-derived giant cells (MGC) and osteoclast formation from mononuclear precursors. In Homo sapiens (Human), this protein is Disintegrin and metalloproteinase domain-containing protein 12 (ADAM12).